Consider the following 275-residue polypeptide: Bis(5'-nucleosyl)-tetraphosphatase, symmetrical (275 aa).

It belongs to the Ap4A hydrolase family.

It catalyses the reaction P(1),P(4)-bis(5'-adenosyl) tetraphosphate + H2O = 2 ADP + 2 H(+). In terms of biological role, hydrolyzes diadenosine 5',5'''-P1,P4-tetraphosphate to yield ADP. The chain is Bis(5'-nucleosyl)-tetraphosphatase, symmetrical from Haemophilus influenzae (strain PittEE).